The chain runs to 725 residues: Dipeptidyl-peptidase 5 (725 aa).

The first 18 residues, Met-1–Ala-18, serve as a signal peptide directing secretion. 6 N-linked (GlcNAc...) asparagine glycosylation sites follow: Asn-75, Asn-96, Asn-153, Asn-258, Asn-383, and Asn-453. The active-site Charge relay system is the Ser-563. N-linked (GlcNAc...) asparagine glycosylation occurs at Asn-610. Catalysis depends on charge relay system residues Asp-646 and His-678.

This sequence belongs to the peptidase S9C family.

It is found in the secreted. The sequence is that of Dipeptidyl-peptidase 5 from Aspergillus oryzae (strain ATCC 42149 / RIB 40) (Yellow koji mold).